Consider the following 379-residue polypeptide: Acyl-CoA dehydrogenase, short-chain specific (379 aa).

The protein belongs to the acyl-CoA dehydrogenase family. Requires FAD as cofactor.

The enzyme catalyses butanoyl-CoA + oxidized [electron-transfer flavoprotein] + H(+) = (2E)-butenoyl-CoA + reduced [electron-transfer flavoprotein]. The catalysed reaction is a short-chain 2,3-saturated fatty acyl-CoA + oxidized [electron-transfer flavoprotein] + H(+) = a short-chain (2E)-enoyl-CoA + reduced [electron-transfer flavoprotein]. The protein operates within lipid metabolism; butanoate metabolism. This Clostridium acetobutylicum (strain ATCC 824 / DSM 792 / JCM 1419 / IAM 19013 / LMG 5710 / NBRC 13948 / NRRL B-527 / VKM B-1787 / 2291 / W) protein is Acyl-CoA dehydrogenase, short-chain specific (bcd).